The sequence spans 451 residues: MKTKLNIYNMQFLLFVFLVWDPARLVLANIQEDEAKNNITIFTRILDRLLDGYDNRLRPGLGDSITEVFTNIYVTSFGPVSDTDMEYTIDVFFRQKWKDERLKFKGPMNILRLNNLMASKIWTPDTFFHNGKKSVAHNMTMPNKLLRIQDDGTLLYTMRLTVQAECPMHLEDFPMDAHSCPLKFGSYAYTTSEVTYIWTYNASDSVQVAPDGSRLNQYDLLGQSIGKETIKSSTGEYTVMTAHFHLKRKIGYFVIQTYLPCIMTVILSQVSFWLNRESVPARTVFGVTTVLTMTTLSISARNSLPKVAYATAMDWFIAVCYAFVFSALIEFATVNYFTKRGWAWDGKSVVNDKKKEKASVMIQNNAYAVAVANYAPNLSKDPVLSTISKSATTPEPNKKPENKPAEAKKTFNSVSKIDRMSRIVFPVLFGTFNLVYWATYLNREPVLGVSP.

The signal sequence occupies residues 1–28; the sequence is MKTKLNIYNMQFLLFVFLVWDPARLVLA. Topologically, residues 29–249 are extracellular; that stretch reads NIQEDEAKNN…MTAHFHLKRK (221 aa). N-linked (GlcNAc...) asparagine glycosylation occurs at asparagine 38. Residue arginine 94 participates in 4-aminobutanoate binding. An N-linked (GlcNAc...) asparagine glycan is attached at asparagine 138. Threonine 157 is a binding site for 4-aminobutanoate. A disulfide bridge links cysteine 166 with cysteine 180. Residues 250-270 form a helical membrane-spanning segment; sequence IGYFVIQTYLPCIMTVILSQV. Over 271–280 the chain is Cytoplasmic; it reads SFWLNRESVP. A helical membrane pass occupies residues 281-300; it reads ARTVFGVTTVLTMTTLSISA. The Extracellular segment spans residues 301 to 311; it reads RNSLPKVAYAT. The chain crosses the membrane as a helical span at residues 312 to 332; the sequence is AMDWFIAVCYAFVFSALIEFA. Residues 333-420 lie on the Cytoplasmic side of the membrane; it reads TVNYFTKRGW…FNSVSKIDRM (88 aa). Residues 421-441 traverse the membrane as a helical segment; sequence SRIVFPVLFGTFNLVYWATYL. Topologically, residues 442 to 451 are extracellular; sequence NREPVLGVSP.

Belongs to the ligand-gated ion channel (TC 1.A.9) family. Gamma-aminobutyric acid receptor (TC 1.A.9.5) subfamily. GABRA2 sub-subfamily. Heteropentamer, formed by a combination of alpha (GABRA1-6), beta (GABRB1-3), gamma (GABRG1-3), delta (GABRD), epsilon (GABRE), rho (GABRR1-3), pi (GABRP) and theta (GABRQ) subunits, each subunit exhibiting distinct physiological and pharmacological properties. Interacts with UBQLN1. Interacts with KIF21B. Interacts with LHFPL4. Interacts with SHISA7; interaction leads to the regulation of GABA(A) receptor trafficking, channel deactivation kinetics and pharmacology. Post-translationally, glycosylated.

It localises to the postsynaptic cell membrane. The protein resides in the cell membrane. The protein localises to the cytoplasmic vesicle membrane. Its subcellular location is the cell projection. It is found in the dendrite. It carries out the reaction chloride(in) = chloride(out). Its activity is regulated as follows. Activated by pentobarbital. Inhibited by the antagonist bicuculline. Alpha subunit of the heteropentameric ligand-gated chloride channel gated by gamma-aminobutyric acid (GABA), a major inhibitory neurotransmitter in the brain. GABA-gated chloride channels, also named GABA(A) receptors (GABAAR), consist of five subunits arranged around a central pore and contain GABA active binding site(s) located at the alpha and beta subunit interfaces. When activated by GABA, GABAARs selectively allow the flow of chloride anions across the cell membrane down their electrochemical gradient. Chloride influx into the postsynaptic neuron following GABAAR opening decreases the neuron ability to generate a new action potential, thereby reducing nerve transmission. The alpha-2 subunit exhibits synaptogenic activity together with beta-2 and very little to no activity together with beta-3, the gamma-2 subunit being necessary but not sufficient to induce rapid synaptic contacts formation. In Homo sapiens (Human), this protein is Gamma-aminobutyric acid receptor subunit alpha-2.